The sequence spans 1024 residues: Eukaryotic translation initiation factor 3 subunit A (1024 aa).

Positions 331–508 (VISSNAPGTG…QAITFQDDVF (178 aa)) constitute a PCI domain. Coiled-coil stretches lie at residues 575-717 (AAED…REEA) and 777-889 (KRRG…RRSR). 2 stretches are compositionally biased toward basic and acidic residues: residues 797–866 (KERR…ERRA) and 873–886 (DKQR…EANR). 2 disordered regions span residues 797–973 (KERR…GAYR) and 1001–1024 (AAAA…GRRA). Low complexity-rich tracts occupy residues 890–906 (AAGT…AADA) and 946–971 (KEAA…SSGA).

The protein belongs to the eIF-3 subunit A family. Component of the eukaryotic translation initiation factor 3 (eIF-3) complex.

Its subcellular location is the cytoplasm. Functionally, RNA-binding component of the eukaryotic translation initiation factor 3 (eIF-3) complex, which is involved in protein synthesis of a specialized repertoire of mRNAs and, together with other initiation factors, stimulates binding of mRNA and methionyl-tRNAi to the 40S ribosome. The eIF-3 complex specifically targets and initiates translation of a subset of mRNAs involved in cell proliferation. This Mycosarcoma maydis (Corn smut fungus) protein is Eukaryotic translation initiation factor 3 subunit A.